Reading from the N-terminus, the 330-residue chain is Aspartate--ammonia ligase (330 aa).

This sequence belongs to the class-II aminoacyl-tRNA synthetase family. AsnA subfamily.

The protein localises to the cytoplasm. It carries out the reaction L-aspartate + NH4(+) + ATP = L-asparagine + AMP + diphosphate + H(+). It functions in the pathway amino-acid biosynthesis; L-asparagine biosynthesis; L-asparagine from L-aspartate (ammonia route): step 1/1. In Streptococcus pyogenes serotype M49 (strain NZ131), this protein is Aspartate--ammonia ligase.